Reading from the N-terminus, the 473-residue chain is Cysteine--tRNA ligase (473 aa).

Cysteine 33 contributes to the Zn(2+) binding site. Positions 35-45 match the 'HIGH' region motif; it reads ATVQGQPHIGH. Zn(2+) is bound by residues cysteine 211, histidine 236, and glutamate 240. The 'KMSKS' region motif lies at 267–271; the sequence is KMSKS. Residue lysine 270 participates in ATP binding.

This sequence belongs to the class-I aminoacyl-tRNA synthetase family. As to quaternary structure, monomer. The cofactor is Zn(2+).

The protein localises to the cytoplasm. It catalyses the reaction tRNA(Cys) + L-cysteine + ATP = L-cysteinyl-tRNA(Cys) + AMP + diphosphate. The protein is Cysteine--tRNA ligase of Mycobacterium leprae (strain Br4923).